The following is a 211-amino-acid chain: Adenylate kinase (211 aa).

10-15 (GSGKGT) is an ATP binding site. Residues 30–59 (STGDLFRENILNSTTLGKEIKKIVEKGELV) are NMP. Residues threonine 31, arginine 36, 57–59 (ELV), 85–88 (GFPR), and glutamine 92 each bind AMP. Residues 121-158 (GRRICKSCNNIFNIYTLATKKNGICDVCKGDLYQREDD) are LID. Arginine 122 lines the ATP pocket. Zn(2+)-binding residues include cysteine 125 and cysteine 128. 131–132 (IF) contributes to the ATP binding site. Residues cysteine 145 and cysteine 148 each coordinate Zn(2+). Residues arginine 155 and arginine 166 each contribute to the AMP site. ATP is bound at residue valine 194.

The protein belongs to the adenylate kinase family. In terms of assembly, monomer.

Its subcellular location is the cytoplasm. It carries out the reaction AMP + ATP = 2 ADP. Its pathway is purine metabolism; AMP biosynthesis via salvage pathway; AMP from ADP: step 1/1. Functionally, catalyzes the reversible transfer of the terminal phosphate group between ATP and AMP. Plays an important role in cellular energy homeostasis and in adenine nucleotide metabolism. The protein is Adenylate kinase of Borrelia garinii subsp. bavariensis (strain ATCC BAA-2496 / DSM 23469 / PBi) (Borreliella bavariensis).